The sequence spans 370 residues: Alpha-(1,3)-fucosyltransferase 7 (370 aa).

Topologically, residues 1–36 (MVQGCLCWRGCCDLKTSFPWVTNSRRLWMNCIGCNP) are cytoplasmic. A helical; Signal-anchor for type II membrane protein membrane pass occupies residues 37-59 (VWRLRAWGCLAGGTTLMVIWLFW). Residues 60 to 370 (LLRSVPGGAP…YEDLESWFQA (311 aa)) lie on the Lumenal side of the membrane. Asn-86 carries N-linked (GlcNAc...) asparagine glycosylation. Cys-96 and Cys-104 are oxidised to a cystine. N-linked (GlcNAc...) asparagine glycosylation is present at Asn-109. A disulfide bridge connects residues Cys-239 and Cys-242. The N-linked (GlcNAc...) asparagine glycan is linked to Asn-319. Cys-346 and Cys-349 are oxidised to a cystine.

The protein belongs to the glycosyltransferase 10 family. In terms of processing, N-glycosylated. As to expression, expressed in lymph node and kidney.

The protein localises to the golgi apparatus. Its subcellular location is the golgi stack membrane. The catalysed reaction is an N-acetyl-alpha-neuraminyl-(2-&gt;3)-beta-D-galactosyl-(1-&gt;4)-N-acetyl-beta-D-glucosaminyl derivative + GDP-beta-L-fucose = an alpha-Neu5Ac-(2-&gt;3)-beta-D-Gal-(1-&gt;4)-[alpha-L-Fuc-(1-&gt;3)]-beta-D-GlcNAc derivative + GDP + H(+). It catalyses the reaction a neolactoside IV(3)-alpha-NeuAc-nLc4Cer + GDP-beta-L-fucose = a neolactoside IV(3)-alpha-NeuNAc,III(3)-alpha-Fuc-nLc4Cer + GDP + H(+). It carries out the reaction a neolactoside VI(3)-alpha-NeuNAc-nLc6Cer + GDP-beta-L-fucose = a neolactoside VI(3)-alpha-NeuAc,V(3)-alphaFuc-nLc6Cer + GDP + H(+). The enzyme catalyses an alpha-Neu5Ac-(2-&gt;3)-beta-D-Gal-(1-&gt;4)-beta-D-GlcNAc-(1-&gt;3)-beta-D-Gal-(1-&gt;4)-[alpha-L-Fuc-(1-&gt;3)]-beta-D-GlcNAc derivative + GDP-beta-L-fucose = an alpha-Neu5Ac-(2-&gt;3)-beta-D-Gal-(1-&gt;4)-[alpha-L-Fuc-(1-&gt;3)]-beta-D-GlcNAc-(1-&gt;3)-beta-D-Gal-(1-&gt;4)-[alpha-L-Fuc-(1-&gt;3)]-beta-D-GlcNAc derivative + GDP + H(+). The catalysed reaction is an alpha-Neu5Ac-(2-&gt;3)-beta-D-Gal-(1-&gt;4)-beta-D-GlcNAc6S derivative + GDP-beta-L-fucose = an alpha-Neu5Ac-(2-&gt;3)-beta-D-Gal-(1-&gt;4)-[alpha-L-Fuc-(1-&gt;3)]-beta-D-GlcNAc6S derivative + GDP + H(+). It catalyses the reaction alpha-Neu5Ac-(2-&gt;3)-beta-D-Gal-(1-&gt;4)-beta-D-GlcNAc-(1-&gt;3)-beta-D-Gal-(1-&gt;4)-D-Glc + GDP-beta-L-fucose = alpha-Neu5Ac-(2-&gt;3)-beta-D-Gal-(1-&gt;4)-[alpha-L-Fuc-(1-&gt;3)]-beta-D-GlcNAc-(1-&gt;3)-beta-D-Gal-(1-&gt;4)-D-Glc + GDP + H(+). It carries out the reaction alpha-Neu5Ac-(2-&gt;3)-beta-D-Gal-(1-&gt;4)-beta-D-GlcNAc-(1-&gt;3)-beta-D-Gal-(1-&gt;4)-[alpha-L-Fuc-(1-&gt;3)]-beta-D-GlcNAc-(1-&gt;3)-beta-D-Gal-(1-&gt;4)-beta-D-GlcNAc + GDP-beta-L-fucose = alpha-Neu5Ac-(2-&gt;3)-beta-D-Gal-(1-&gt;4)-[alpha-L-Fuc-(1-&gt;3)]-beta-D-GlcNAc-(1-&gt;3)-beta-D-Gal-(1-&gt;4)-[alpha-L-Fuc-(1-&gt;3)]-beta-D-GlcNAc-(1-&gt;3)-beta-D-Gal-(1-&gt;4)-beta-D-GlcNAc + GDP + H(+). The enzyme catalyses alpha-Neu5Ac-(2-&gt;3)-beta-D-Gal-(1-&gt;4)-beta-D-GlcNAc-(1-&gt;3)-beta-D-Gal-(1-&gt;4)-beta-D-GlcNAc-(1-&gt;3)-beta-D-Gal-(1-&gt;4)-beta-D-GlcNAc + GDP-beta-L-fucose = alpha-Neu5Ac-(2-&gt;3)-beta-D-Gal-(1-&gt;4)-[alpha-L-Fuc-(1-&gt;3)]-beta-D-GlcNAc-(1-&gt;3)-beta-D-Gal-(1-&gt;4)-beta-D-GlcNAc-(1-&gt;3)-beta-D-Gal-(1-&gt;4)-beta-D-GlcNAc + GDP + H(+). Its pathway is protein modification; protein glycosylation. Inhibited by NaCl. Inhibited by GDP in a concentration dependent manner, with an IC(50) value of 93 uM. Also inhibited by GMP and GTP. Inhibited by N-ethylmaleimide. Activated by poly(ethylene glycol) by enhancing the thermal stability of FUT7. Activated by Mn2+, Ca2+, and Mg2+. Both panosialin A and B inhibit activity with IC(50) values of 4.8 and 5.3 ug/ml, respectively. Inhibited by gallic acid (GA) and (-)-epigallocatechin gallate (EGCG) in a time-dependent and irreversible manner with IC(50) values of 60 and 700 nM, respectively. Its function is as follows. Catalyzes the transfer of L-fucose, from a guanosine diphosphate-beta-L-fucose, to the N-acetyl glucosamine (GlcNAc) of a distal alpha2,3 sialylated lactosamine unit of a glycoprotein or a glycolipid-linked sialopolylactosamines chain through an alpha-1,3 glycosidic linkage and participates in the final fucosylation step in the biosynthesis of the sialyl Lewis X (sLe(x)), a carbohydrate involved in cell and matrix adhesion during leukocyte trafficking and fertilization. In vitro, also synthesizes sialyl-dimeric-Lex structures, from VIM-2 structures and both di-fucosylated and trifucosylated structures from mono-fucosylated precursors. However does not catalyze alpha 1-3 fucosylation when an internal alpha 1-3 fucosylation is present in polylactosamine chain and the fucosylation rate of the internal GlcNAc residues is reduced once fucose has been added to the distal GlcNAc. Also catalyzes the transfer of a fucose from GDP-beta-fucose to the 6-sulfated a(2,3)sialylated substrate to produce 6-sulfo sLex mediating significant L-selectin-dependent cell adhesion. Through sialyl-Lewis(x) biosynthesis, can control SELE- and SELP-mediated cell adhesion with leukocytes and allows leukocytes tethering and rolling along the endothelial tissue thereby enabling the leukocytes to accumulate at a site of inflammation. May enhance embryo implantation through sialyl Lewis X (sLeX)-mediated adhesion of embryo cells to endometrium. May affect insulin signaling by up-regulating the phosphorylation and expression of some signaling molecules involved in the insulin-signaling pathway through SLe(x) which is present on the glycans of the INSRR alpha subunit. The polypeptide is Alpha-(1,3)-fucosyltransferase 7 (Rattus norvegicus (Rat)).